A 353-amino-acid chain; its full sequence is 3'(2'),5'-bisphosphate nucleotidase (353 aa).

The active-site Proton acceptor is Asp-50. Residues Glu-73, Asp-136, Ile-138, and Asp-139 each contribute to the Mg(2+) site. Thr-141 (proton acceptor) is an active-site residue. The adenosine 3',5'-bisphosphate site is built by Thr-141, His-232, Ser-256, Lys-259, Arg-273, and Asp-286. AMP-binding residues include His-232, Ser-256, Lys-259, Arg-273, and Asp-286. Asp-286 contributes to the Mg(2+) binding site.

It belongs to the inositol monophosphatase superfamily. The cofactor is Mg(2+).

The catalysed reaction is 3'-phosphoadenylyl sulfate + H2O = adenosine 5'-phosphosulfate + phosphate. It carries out the reaction adenosine 3',5'-bisphosphate + H2O = AMP + phosphate. The enzyme catalyses adenosine 2',5'-bisphosphate + H2O = AMP + phosphate. It catalyses the reaction 1D-myo-inositol 1,4-bisphosphate + H2O = 1D-myo-inositol 4-phosphate + phosphate. The catalysed reaction is 1D-myo-inositol 1,3,4-trisphosphate + H2O = 1D-myo-inositol 3,4-bisphosphate + phosphate. Inhibited by Li(+) and Na(+). In terms of biological role, phosphatase that converts adenosine 3'-phosphate 5'-phosphosulfate (PAPS) to adenosine 5'-phosphosulfate (APS) and 3'(2')-phosphoadenosine 5'-phosphate (PAP) to AMP. May regulate the flux of sulfur in the sulfur-activation pathway by converting PAPS to APS. Is also able to hydrolyze inositol 1,4-bisphosphate (Ins(1,4)P2) and inositol 1,3,4-trisphosphate (Ins(1,3,4)P3), but is not active on inositol 1,4,5-trisphosphate, inositol 1-phosphate, fructose 1,6-bisphosphate, AMP and ATP. Functionally, confers resistance to lithium. The sequence is that of 3'(2'),5'-bisphosphate nucleotidase (tol1) from Schizosaccharomyces pombe (strain 972 / ATCC 24843) (Fission yeast).